A 1547-amino-acid chain; its full sequence is Fatty acid synthase subunit alpha (1547 aa).

Residues 94 to 121 (TLPEAHPPPPIDSHQEPSTQTQATHRSA) form a disordered region. Residues 109-118 (EPSTQTQATH) show a composition bias toward polar residues. Residues 145–221 (LPVSTIVRSL…ETMSIGHNGR (77 aa)) enclose the Carrier domain. Ser-180 carries the post-translational modification O-(pantetheine 4'-phosphoryl)serine. A ketoreductase (KR) domain region spans residues 563–798 (GKNVLITGAG…ATLMGGTITT (236 aa)). Residues 1004 to 1476 (KESLQEIVLQ…QKGSQAILIH (473 aa)) enclose the Ketosynthase family 3 (KS3) domain. Residues Cys-1190 and His-1442 each act as for beta-ketoacyl synthase activity in the active site.

This sequence belongs to the thiolase-like superfamily. Fungal fatty acid synthetase subunit alpha family. Pantetheine 4'-phosphate serves as cofactor.

It catalyses the reaction acetyl-CoA + n malonyl-CoA + 2n NADPH + 4n H(+) = a long-chain-acyl-CoA + n CoA + n CO2 + 2n NADP(+).. The enzyme catalyses a fatty acyl-[ACP] + malonyl-[ACP] + H(+) = a 3-oxoacyl-[ACP] + holo-[ACP] + CO2. The catalysed reaction is a (3R)-hydroxyacyl-[ACP] + NADP(+) = a 3-oxoacyl-[ACP] + NADPH + H(+). The protein operates within mycotoxin biosynthesis; HC-toxin biosynthesis. In terms of biological role, fatty acid synthase alpha subunit, part of the diffuse TOX2 gene cluster that mediates the biosynthesis of the HC-toxin, cyclic tetrapeptide of structure cyclo(D-Pro-L-Ala-D-Ala-L-Aeo), where Aeo stands for 2-amino-9,10-epoxi-8-oxodecanoic acid. HC-toxin is a determinant of specificity and virulence in the interaction between the producing fungus and its host, maize. TOXH contribute to the synthesis of the decanoic backbone of 2-amino-9,10-epoxi-8-oxodecanoic acid, an essential precursor for the production of the major forms of HC-toxin by the non-ribosomal peptide synthetase HTS1. The chain is Fatty acid synthase subunit alpha from Cochliobolus carbonum (Maize leaf spot fungus).